Reading from the N-terminus, the 316-residue chain is Probable cell division protein WhiA (316 aa).

Residues Thr-275–Ala-309 constitute a DNA-binding region (H-T-H motif).

Belongs to the WhiA family.

Involved in cell division and chromosome segregation. In Bacillus anthracis (strain CDC 684 / NRRL 3495), this protein is Probable cell division protein WhiA.